The sequence spans 1624 residues: Putative serine/threonine-protein kinase/receptor R831 (1624 aa).

The N-terminal stretch at 1-25 (MHSVYTKYTIILILLVIYQGLPTNT) is a signal peptide. Residues N152, N169, N200, N205, N225, N240, N245, N292, N364, N479, N541, N720, and N737 are each glycosylated (N-linked (GlcNAc...) asparagine; by host). Residues 747-767 (VIPIACIFGLLLLTLLIVIIF) form a helical membrane-spanning segment. The Protein kinase 1 domain occupies 786-1049 (LEIGETLGTG…EIMTRLSNIL (264 aa)). Residues 792–800 (LGTGGYGEV) and K813 contribute to the ATP site. D908 serves as the catalytic Proton acceptor. Low complexity predominate over residues 1054–1093 (NMTSGTSSSSLSSGGIGKSITDSKSSNSRSSVESSNTSNT). A disordered region spans residues 1054 to 1101 (NMTSGTSSSSLSSGGIGKSITDSKSSNSRSSVESSNTSNTFRGIDRHN). The 144-residue stretch at 1109 to 1252 (TVAFIDIISA…STVNITGKIT (144 aa)) folds into the Guanylate cyclase domain. Positions 1364–1615 (ISIGKQIGLG…MTEVVQQLML (252 aa)) constitute a Protein kinase 2 domain. ATP is bound by residues 1370-1378 (IGLGSYGIV) and K1391. D1487 functions as the Proton acceptor in the catalytic mechanism.

It is found in the membrane. It carries out the reaction L-seryl-[protein] + ATP = O-phospho-L-seryl-[protein] + ADP + H(+). The catalysed reaction is L-threonyl-[protein] + ATP = O-phospho-L-threonyl-[protein] + ADP + H(+). The polypeptide is Putative serine/threonine-protein kinase/receptor R831 (Acanthamoeba polyphaga (Amoeba)).